We begin with the raw amino-acid sequence, 162 residues long: Corticoliberin-1 (162 aa).

A signal peptide spans 1-24 (MKLNFLVTTVALLVAFPPPYECRA). Residues 25-119 (IDSSSNQPAT…ALDSEERERR (95 aa)) constitute a propeptide that is removed on maturation. Phe-160 bears the Phenylalanine amide mark.

The protein belongs to the sauvagine/corticotropin-releasing factor/urotensin I family.

The protein resides in the secreted. In terms of biological role, this hormone from hypothalamus regulates the release of corticotropin from pituitary gland. This chain is Corticoliberin-1 (crf1), found in Catostomus commersonii (White sucker).